Here is a 215-residue protein sequence, read N- to C-terminus: RNA pyrophosphohydrolase (215 aa).

The Nudix hydrolase domain maps to 6–149; sequence GFRPNVGIIL…KRDVYQLALT (144 aa). The short motif at 38–59 is the Nudix box element; that stretch reads GGIKYGETPMQAMYRELHEETG.

The protein belongs to the Nudix hydrolase family. RppH subfamily. It depends on a divalent metal cation as a cofactor.

In terms of biological role, accelerates the degradation of transcripts by removing pyrophosphate from the 5'-end of triphosphorylated RNA, leading to a more labile monophosphorylated state that can stimulate subsequent ribonuclease cleavage. The polypeptide is RNA pyrophosphohydrolase (Burkholderia vietnamiensis (strain G4 / LMG 22486) (Burkholderia cepacia (strain R1808))).